The sequence spans 367 residues: Nodulation protein 10 (367 aa).

Transmembrane regions (helical) follow at residues 15-37, 46-66, 88-108, 109-129, 155-175, 183-203, 208-228, 245-265, 270-290, 312-332, and 335-355; these read FDLL…WLHL, VFDL…SGFL, IFPA…VTGG, LNVT…LTAA, VLWT…LLEI, GALV…HFNI, NPFL…GVLA, WWLA…AAFI, AAPV…SAAH, MLVM…LWIV, and VGTV…AMKL.

This sequence belongs to the acyltransferase 3 family.

The protein resides in the cell membrane. Not known. NodX allows Rhizobium leguminosarum biovar viciae strain TOM to nodulate Afghanistan peas. The protein is Nodulation protein 10 (nodX) of Rhizobium leguminosarum bv. viciae.